A 354-amino-acid chain; its full sequence is UPF0283 protein YcjF (354 aa).

3 consecutive transmembrane segments (helical) span residues 71 to 91 (MVTV…VQWV), 101 to 121 (IALG…GSVV), and 214 to 234 (ESAL…FIAW).

The protein belongs to the UPF0283 family.

The protein resides in the cell inner membrane. The protein is UPF0283 protein YcjF (ycjF) of Yersinia enterocolitica.